A 358-amino-acid chain; its full sequence is Uroporphyrinogen decarboxylase (358 aa).

Substrate-binding positions include 27 to 31, Asp77, Tyr154, Ser209, and His330; that span reads RQAGR.

The protein belongs to the uroporphyrinogen decarboxylase family. In terms of assembly, homodimer.

The protein localises to the cytoplasm. It catalyses the reaction uroporphyrinogen III + 4 H(+) = coproporphyrinogen III + 4 CO2. It functions in the pathway porphyrin-containing compound metabolism; protoporphyrin-IX biosynthesis; coproporphyrinogen-III from 5-aminolevulinate: step 4/4. Its function is as follows. Catalyzes the decarboxylation of four acetate groups of uroporphyrinogen-III to yield coproporphyrinogen-III. This Acinetobacter baylyi (strain ATCC 33305 / BD413 / ADP1) protein is Uroporphyrinogen decarboxylase.